The sequence spans 283 residues: Probable endonuclease 4 (283 aa).

Zn(2+) is bound by residues H69, H109, E145, D179, H182, H216, D229, H231, and E261.

This sequence belongs to the AP endonuclease 2 family. Zn(2+) is required as a cofactor.

It carries out the reaction Endonucleolytic cleavage to 5'-phosphooligonucleotide end-products.. Endonuclease IV plays a role in DNA repair. It cleaves phosphodiester bonds at apurinic or apyrimidinic (AP) sites, generating a 3'-hydroxyl group and a 5'-terminal sugar phosphate. In Campylobacter concisus (strain 13826), this protein is Probable endonuclease 4.